The primary structure comprises 1323 residues: MKRNGSRNCLNRRSRFGSRERDWLREDVKRGCVYLYGADTTTATTTTTTSSSSSSSSSSSDLHLVLCTVETPASEICAGEGRESLYLQLHGDLVRRLEPTERPLQIVYDYLSRLGFDDPVRIQEEATNPDLGCMIRFYGEKPCHMDRLDRILLSGIYNVRKGKTQLHKWAERLVVLCGTCLIVSSVKDCQTGKMHILPLVGGKIEEVKRRQYSLAFSSAGAQAQTYHVSFETLAEYQRWQRQASKVVSQRISTVDLSCYSLEEVPEHLFYSQDITYLNLRHNFMQLERPGGLDTLYKFSQLKGLNLSHNKLGLFPILLCEISTLTELNLSCNGFHDLPSQIGNLLNLQTLCLDGNFLTTLPEELGNLQQLSSLGISFNNFSQIPEVYEKLTMLDRVVMAGNCLEVLNLGVLNRMNHIKHVDLRMNHLKTMVIENLEGNKHITHVDLRDNRLTDLDLSSLCSLEQLHCGRNQLRELTLSGFSLRTLYASSNRLTAVNVYPVPSLLTFLDLSRNLLECVPDWACEAKKIEVLDVSYNLLTEVPVRILSSLSLRKLMLGHNHVQNLPTLVEHIPLEVLDLQHNALTRLPDTLFSKALNLRYLNASANSLESLPSACTGEESLSMLQLLYLTNNLLTDQCIPVLVGHLHLRILHLANNQLQTFPASKLNKLEQLEELNLSGNKLKTIPTTIANCKRLHTLVAHSNNISIFPEILQLPQIQFVDLSCNDLTEILIPEALPATLQDLDLTGNTNLVLEHKTLDIFSHITTLKIDQKPLPTTDSTVTSTFWSHGLAEMAGQRNKLCVSALAMDSFAEGVGAVYGMFDGDRNEELPRLLQCTMADVLLEEVQQSTNDTVFMANTFLVSHRKLGMAGQKLGSSALLCYIRPDTADPASSFSLTVANVGTCQAVLCRGGKPVPLSKVFSLEQDPEEAQRVKDQKAIITEDNKVNGVTCCTRMLGCTYLYPWILPKPHISSTPLTIQDELLILGNKALWEHLSYTEAVNAVRHVQDPLAAAKKLCTLAQSYGCQDNVGAMVVYLNIGEEGCTCEMNGLTLPGPVGFASTTTIKDAPKPATPSSSSGIASEFSSEMSTSEVSSEVGSTASDEHNAGGLDTALLPRPERRCSLHPTPTSGLFQRQPSSATFSSNQSDNGLDSDDDQPVEGVITNGSKVEVEVDIHCCRGRDLENSPPLIESSPTLCSEEHARGSCFGIRRQNSVNSGMLLPMSKDRMELQKSPSTSCLYGKKLSNGSIVPLEDSLNLIEVATEVPKRKTGYFAAPTQMEPEDQFVVPHDLEEEVKEQMKQHQDSRLEPEPHEEDRTEPPEEFDTAL.

In terms of domain architecture, PH spans 150-248 (RILLSGIYNV…WQRQASKVVS (99 aa)). LRR repeat units lie at residues 250–271 (RISTVDLSCYSLEEVPEHLFYS), 273–296 (DITYLNLRHNFMQLERPGGLDTLY), 300–321 (QLKGLNLSHNKLGLFPILLCEI), 323–344 (TLTELNLSCNGFHDLPSQIGNL), 346–368 (NLQTLCLDGNFLTTLPEELGNLQ), 369–390 (QLSSLGISFNNFSQIPEVYEKL), 392–412 (MLDRVVMAGNCLEVLNLGVLN), 416–439 (HIKHVDLRMNHLKTMVIENLEGNK), 440–460 (HITHVDLRDNRLTDLDLSSLC), 461–480 (SLEQLHCGRNQLRELTLSGF), 481–502 (SLRTLYASSNRLTAVNVYPVPS), 503–524 (LLTFLDLSRNLLECVPDWACEA), 526–547 (KIEVLDVSYNLLTEVPVRILSS), 549–570 (SLRKLMLGHNHVQNLPTLVEHI), 571–592 (PLEVLDLQHNALTRLPDTLFSK), 595–616 (NLRYLNASANSLESLPSACTGE), 621–644 (MLQLLYLTNNLLTDQCIPVLVGHL), 645–666 (HLRILHLANNQLQTFPASKLNK), 669–690 (QLEELNLSGNKLKTIPTTIANC), 692–713 (RLHTLVAHSNNISIFPEILQLP), 714–735 (QIQFVDLSCNDLTEILIPEALP), and 737–758 (TLQDLDLTGNTNLVLEHKTLDI). The 249-residue stretch at 785–1033 (SHGLAEMAGQ…DNVGAMVVYL (249 aa)) folds into the PPM-type phosphatase domain. Residues aspartate 820, glycine 821, lysine 985, and aspartate 1024 each coordinate Mn(2+). The segment at 1060-1157 (TIKDAPKPAT…DSDDDQPVEG (98 aa)) is disordered. The span at 1071-1097 (SSSSGIASEFSSEMSTSEVSSEVGSTA) shows a compositional bias: low complexity. A compositionally biased stretch (polar residues) spans 1122–1146 (PTPTSGLFQRQPSSATFSSNQSDNG). The residue at position 1210 (serine 1210) is a Phosphoserine. Positions 1285 to 1323 (HDLEEEVKEQMKQHQDSRLEPEPHEEDRTEPPEEFDTAL) are disordered. Positions 1292-1315 (KEQMKQHQDSRLEPEPHEEDRTEP) are enriched in basic and acidic residues.

As to quaternary structure, interacts with AKT1, AKT3 and PRKCB isoform beta-II. Interacts with STK4, RPS6KB1, RAF1. Interacts with FKBP5; FKBP5 acts as a scaffold for PHLPP2 and Akt. Interacts with NHERF1; NHERF1 scaffolds a heterotrimeric complex with PTEN. Mn(2+) is required as a cofactor. As to expression, in colorectal cancer tissue, expression is highest in the surface epithelium of normal colonic mucosa adjacent to the cancer tissue but is largely excluded from the crypt bases. Expression is lost or significantly decreased in 80% of tested tumors (at protein level).

It is found in the cytoplasm. The protein resides in the membrane. The protein localises to the nucleus. It carries out the reaction O-phospho-L-seryl-[protein] + H2O = L-seryl-[protein] + phosphate. The catalysed reaction is O-phospho-L-threonyl-[protein] + H2O = L-threonyl-[protein] + phosphate. Its activity is regulated as follows. Inhibited by AKT1, AKT2 and AKT3. Activated by oleic acid and arachidonic acid. Its function is as follows. Protein phosphatase involved in regulation of Akt and PKC signaling. Mediates dephosphorylation in the C-terminal domain hydrophobic motif of members of the AGC Ser/Thr protein kinase family; specifically acts on 'Ser-473' of AKT1, 'Ser-660' of PRKCB isoform beta-II and 'Ser-657' of PRKCA. Akt regulates the balance between cell survival and apoptosis through a cascade that primarily alters the function of transcription factors that regulate pro- and antiapoptotic genes. Dephosphorylation of 'Ser-473' of Akt triggers apoptosis and decreases cell proliferation. Also controls the phosphorylation of AKT3. Dephosphorylates STK4 on 'Thr-387' leading to STK4 activation and apoptosis. Dephosphorylates RPS6KB1 and is involved in regulation of cap-dependent translation. Inhibits cancer cell proliferation and may act as a tumor suppressor. Dephosphorylation of PRKCA and PRKCB leads to their destabilization and degradation. Dephosphorylates RAF1 inhibiting its kinase activity. The chain is PH domain leucine-rich repeat-containing protein phosphatase 2 (PHLPP2) from Homo sapiens (Human).